Here is a 266-residue protein sequence, read N- to C-terminus: Large ribosomal subunit protein eL8 (266 aa).

Residues K11, K20, and K21 each participate in a glycyl lysine isopeptide (Lys-Gly) (interchain with G-Cter in SUMO2) cross-link. K34 is modified (N6-acetyllysine). A Glycyl lysine isopeptide (Lys-Gly) (interchain with G-Cter in SUMO2) cross-link involves residue K48. Position 97 is an N6-acetyllysine; alternate (K97). K97 is covalently cross-linked (Glycyl lysine isopeptide (Lys-Gly) (interchain with G-Cter in SUMO2); alternate). K125 participates in a covalent cross-link: Glycyl lysine isopeptide (Lys-Gly) (interchain with G-Cter in SUMO2). K217 is subject to N6-acetyllysine. K245 participates in a covalent cross-link: Glycyl lysine isopeptide (Lys-Gly) (interchain with G-Cter in SUMO2).

The protein belongs to the eukaryotic ribosomal protein eL8 family. As to quaternary structure, component of the large ribosomal subunit. Interacts with CRY1. Interacts with DICER1, AGO2, TARBP2, MOV10 and EIF6; they form a large RNA-induced silencing complex (RISC).

Its subcellular location is the cytoplasm. In terms of biological role, component of the large ribosomal subunit. The ribosome is a large ribonucleoprotein complex responsible for the synthesis of proteins in the cell. This Rattus norvegicus (Rat) protein is Large ribosomal subunit protein eL8 (Rpl7a).